The sequence spans 349 residues: UDP-N-acetylenolpyruvoylglucosamine reductase (349 aa).

An FAD-binding PCMH-type domain is found at 25–197 (GIAARARFAA…VAVTFRLPKQ (173 aa)). Residue R173 is part of the active site. Catalysis depends on S249, which acts as the Proton donor. E345 is a catalytic residue.

It belongs to the MurB family. FAD serves as cofactor.

The protein localises to the cytoplasm. It carries out the reaction UDP-N-acetyl-alpha-D-muramate + NADP(+) = UDP-N-acetyl-3-O-(1-carboxyvinyl)-alpha-D-glucosamine + NADPH + H(+). The protein operates within cell wall biogenesis; peptidoglycan biosynthesis. Its function is as follows. Cell wall formation. This Burkholderia orbicola (strain MC0-3) protein is UDP-N-acetylenolpyruvoylglucosamine reductase.